A 202-amino-acid polypeptide reads, in one-letter code: Uclacyanin-2 (202 aa).

A signal peptide spans 1–29 (MAMNGLSKMAVAAATALLLVLTIVPGAVA). One can recognise a Phytocyanin domain in the interval 30–126 (VTYTIEWTTG…GMKLAVNVVA (97 aa)). Cu cation is bound at residue H65. Residue N86 is glycosylated (N-linked (GlcNAc...) asparagine). Cu cation contacts are provided by C106, H111, and M118. The segment at 129–181 (AGPPATPTPPSSTPGTPTTPESPPSGGSPTPTTPTPGAGSTSPPPPPKASGAS) is disordered. Residues 141–169 (TPGTPTTPESPPSGGSPTPTTPTPGAGST) are compositionally biased toward low complexity. S178 carries the GPI-anchor amidated serine lipid modification. The propeptide at 179–202 (GASKGVMSYVLVGVSMVLGYGLWM) is removed in mature form.

Its subcellular location is the cell membrane. Functionally, probably acts as an electron carrier involved in oxygen activation and/or lignin formation. This is Uclacyanin-2 from Arabidopsis thaliana (Mouse-ear cress).